The following is a 403-amino-acid chain: Acetylornithine aminotransferase (403 aa).

Pyridoxal 5'-phosphate-binding positions include 101-102 (GA) and phenylalanine 134. Arginine 137 contributes to the N(2)-acetyl-L-ornithine binding site. 219–222 (DEVQ) lines the pyridoxal 5'-phosphate pocket. Lysine 248 is subject to N6-(pyridoxal phosphate)lysine. Threonine 276 provides a ligand contact to N(2)-acetyl-L-ornithine. Threonine 277 lines the pyridoxal 5'-phosphate pocket.

Belongs to the class-III pyridoxal-phosphate-dependent aminotransferase family. ArgD subfamily. Homodimer. Pyridoxal 5'-phosphate serves as cofactor.

It localises to the cytoplasm. The enzyme catalyses N(2)-acetyl-L-ornithine + 2-oxoglutarate = N-acetyl-L-glutamate 5-semialdehyde + L-glutamate. The protein operates within amino-acid biosynthesis; L-arginine biosynthesis; N(2)-acetyl-L-ornithine from L-glutamate: step 4/4. This chain is Acetylornithine aminotransferase, found in Brucella melitensis biotype 1 (strain ATCC 23456 / CCUG 17765 / NCTC 10094 / 16M).